The primary structure comprises 230 residues: Dephospho-CoA kinase (230 aa).

In terms of domain architecture, DPCK spans 3–225 (IIGLTGGIAT…REGGAICPTP (223 aa)). 11–16 (ATGKST) lines the ATP pocket.

It belongs to the CoaE family.

It localises to the cytoplasm. It catalyses the reaction 3'-dephospho-CoA + ATP = ADP + CoA + H(+). It functions in the pathway cofactor biosynthesis; coenzyme A biosynthesis; CoA from (R)-pantothenate: step 5/5. Its function is as follows. Catalyzes the phosphorylation of the 3'-hydroxyl group of dephosphocoenzyme A to form coenzyme A. The protein is Dephospho-CoA kinase of Synechococcus sp. (strain JA-3-3Ab) (Cyanobacteria bacterium Yellowstone A-Prime).